The primary structure comprises 419 residues: MHHLRALVGVGLAGLAAGVPLTDKISVKPRQAPGAQNVVYWGQNGGGTIENNDLAAYCQPNSGIDVLVLAFLYQFGNGGNIPSGTIGQSCYISTSGQGQNCEALTAAIHTCQSAGVKIVLSLGGATSSYSLQTQAQAEQIGQYLWDSYGNSGNKTVQRPFGSNFVNGFDFDIEVNGGSSQYYQYMIAKLRANFASDKSNTYLITGAPQCPIPEPNMGVIISNSVFDHLYVQFYNNNNYTVPCALGINGNAPFNYNNWTSFIADTPSAGAKIFIGVPASPLASTGTPSGAQYYAAPEQLAAIVGEYRSDAHFGGIMMWSAGFSDANVNDGCTYAQQAKSILVNGAPCPSSGPPSSTPATAPAPTATTMPSSTSVSSPTASPTGGTVPQWGQCGGEGYSGPTQCVPPYQCVKQGDWWSSCR.

An N-terminal signal peptide occupies residues M1–G18. A GH18 domain is found at A35–G343. Residue N153 is glycosylated (N-linked (GlcNAc...) asparagine). Catalysis depends on E173, which acts as the Proton donor. N-linked (GlcNAc...) asparagine glycans are attached at residues N237 and N256. A disordered region spans residues G343 to Q390. Positions T355–T384 are enriched in low complexity. Residues G383–R419 enclose the CBM1 domain.

Belongs to the glycosyl hydrolase 18 family. Chitinase class III subfamily.

Its subcellular location is the secreted. It catalyses the reaction Random endo-hydrolysis of N-acetyl-beta-D-glucosaminide (1-&gt;4)-beta-linkages in chitin and chitodextrins.. Functionally, secreted chitinase involved in the degradation of chitin, a component of the cell walls of fungi and exoskeletal elements of some animals (including worms and arthropods). Participates in the infection process and directly acts in the penetration process of the host cuticle. The protein is Endochitinase 2 (chi2) of Metarhizium anisopliae (Entomophthora anisopliae).